Here is a 493-residue protein sequence, read N- to C-terminus: Ubiquitin carboxyl-terminal hydrolase 14 (493 aa).

The 77-residue stretch at 4–80 (YSVTVKWGKE…MMGSADALPE (77 aa)) folds into the Ubiquitin-like domain. Threonine 52 is modified (phosphothreonine). A USP domain is found at 105–482 (CGLTNLGNTC…IAYVLLYGPR (378 aa)). Cysteine 114 functions as the Nucleophile in the catalytic mechanism. Serine 143 and serine 148 each carry phosphoserine. The residue at position 235 (threonine 235) is a Phosphothreonine. Phosphoserine is present on residues serine 237, serine 302, and serine 431. The Proton acceptor role is filled by histidine 434. An N6-acetyllysine modification is found at lysine 448.

The protein belongs to the peptidase C19 family. USP14/UBP6 subfamily. In terms of assembly, homodimer (Potential). Associates with the 26S proteasome. Interacts with FANCC, CXCR4 and ERN1. Interacts with TRIM14; this interaction recruits USP14 to cleave ubiquitin chains of CGAS and KDM4D.

It is found in the cytoplasm. The protein resides in the cell membrane. The catalysed reaction is Thiol-dependent hydrolysis of ester, thioester, amide, peptide and isopeptide bonds formed by the C-terminal Gly of ubiquitin (a 76-residue protein attached to proteins as an intracellular targeting signal).. Its function is as follows. Proteasome-associated deubiquitinase which releases ubiquitin from the proteasome targeted ubiquitinated proteins. Ensures the regeneration of ubiquitin at the proteasome. Is a reversibly associated subunit of the proteasome and a large fraction of proteasome-free protein exists within the cell. Required for the degradation of the chemokine receptor CXCR4 which is critical for CXCL12-induced cell chemotaxis. Also serves as a physiological inhibitor of endoplasmic reticulum-associated degradation (ERAD) under the non-stressed condition by inhibiting the degradation of unfolded endoplasmic reticulum proteins via interaction with ERN1. Indispensable for synaptic development and function at neuromuscular junctions (NMJs). Plays a role in the innate immune defense against viruses by stabilizing the viral DNA sensor CGAS and thus inhibiting its autophagic degradation. Inhibits OPTN-mediated selective autophagic degradation of KDM4D and thereby negatively regulates H3K9me2 and H3K9me3. This Mus musculus (Mouse) protein is Ubiquitin carboxyl-terminal hydrolase 14 (Usp14).